Reading from the N-terminus, the 501-residue chain is Probable pectate lyase 13 (501 aa).

Residues 1–22 (MLLQNFSNTIFLLCLFFTLLSA) form the signal peptide. N-linked (GlcNAc...) asparagine glycans are attached at residues asparagine 27 and asparagine 49. The disordered stretch occupies residues 55 to 78 (RQLSSPSSSSSSSSSSSSSSCRTG). Low complexity predominate over residues 58–74 (SSPSSSSSSSSSSSSSS). Residues aspartate 217, aspartate 241, and aspartate 245 each coordinate Ca(2+). Residue arginine 297 is part of the active site. Disordered regions lie at residues 329 to 359 (INSQ…DGEW) and 408 to 463 (NAGV…SSGD). Over residues 343-357 (SAKEVTKRVDSKDDG) the composition is skewed to basic and acidic residues. Residues 430–449 (GGDGGGGGSSGGSSGGGMDV) are compositionally biased toward gly residues. Residues 450–463 (MGGTTRGSSSSSGD) are compositionally biased toward low complexity. Serine 474 is lipidated: GPI-anchor amidated serine. A propeptide spans 475-501 (DAPSRPRLTLLFSLLMISVLSLSTLLL) (removed in mature form).

This sequence belongs to the polysaccharide lyase 1 family. Requires Ca(2+) as cofactor. Expressed equally in mature leaves, buds, flowers, rosettes and roots.

The protein resides in the cell membrane. It carries out the reaction Eliminative cleavage of (1-&gt;4)-alpha-D-galacturonan to give oligosaccharides with 4-deoxy-alpha-D-galact-4-enuronosyl groups at their non-reducing ends.. It participates in glycan metabolism; pectin degradation; 2-dehydro-3-deoxy-D-gluconate from pectin: step 2/5. Its function is as follows. Susceptibility factor required for infection by most powdery mildews, but not by unrelated pathogens. Exact function not known, but clearly affects cell wall composition. The protein is Probable pectate lyase 13 (PMR6) of Arabidopsis thaliana (Mouse-ear cress).